We begin with the raw amino-acid sequence, 295 residues long: Methionine aminopeptidase (295 aa).

Position 62 (His-62) interacts with substrate. A divalent metal cation contacts are provided by Asp-82, Asp-93, and His-153. Residue His-161 coordinates substrate. The a divalent metal cation site is built by Glu-187 and Glu-280.

As to quaternary structure, monomer. The cofactor is Co(2+). Zn(2+) serves as cofactor. It depends on Mn(2+) as a cofactor. Fe(2+) is required as a cofactor.

The catalysed reaction is Release of N-terminal amino acids, preferentially methionine, from peptides and arylamides.. In terms of biological role, removes the N-terminal methionine from nascent proteins. The N-terminal methionine is often cleaved when the second residue in the primary sequence is small and uncharged (Met-Ala-, Cys, Gly, Pro, Ser, Thr, or Val). In Pyrococcus furiosus (strain ATCC 43587 / DSM 3638 / JCM 8422 / Vc1), this protein is Methionine aminopeptidase.